A 278-amino-acid polypeptide reads, in one-letter code: Urease accessory protein UreD (278 aa).

It belongs to the UreD family. In terms of assembly, ureD, UreF and UreG form a complex that acts as a GTP-hydrolysis-dependent molecular chaperone, activating the urease apoprotein by helping to assemble the nickel containing metallocenter of UreC. The UreE protein probably delivers the nickel.

Its subcellular location is the cytoplasm. Its function is as follows. Required for maturation of urease via the functional incorporation of the urease nickel metallocenter. The polypeptide is Urease accessory protein UreD (Blochmanniella pennsylvanica (strain BPEN)).